A 521-amino-acid polypeptide reads, in one-letter code: GMP synthase [glutamine-hydrolyzing] (521 aa).

One can recognise a Glutamine amidotransferase type-1 domain in the interval Lys-5–Asp-203. Cys-82 (nucleophile) is an active-site residue. Active-site residues include His-177 and Glu-179. In terms of domain architecture, GMPS ATP-PPase spans Trp-204 to Arg-396. Ser-231–Ser-237 is a binding site for ATP.

As to quaternary structure, homodimer.

The catalysed reaction is XMP + L-glutamine + ATP + H2O = GMP + L-glutamate + AMP + diphosphate + 2 H(+). The protein operates within purine metabolism; GMP biosynthesis; GMP from XMP (L-Gln route): step 1/1. In terms of biological role, catalyzes the synthesis of GMP from XMP. This is GMP synthase [glutamine-hydrolyzing] from Aromatoleum aromaticum (strain DSM 19018 / LMG 30748 / EbN1) (Azoarcus sp. (strain EbN1)).